A 223-amino-acid polypeptide reads, in one-letter code: Protein phosphatase 1 regulatory subunit 3C (223 aa).

The region spanning 104 to 209 is the CBM21 domain; the sequence is REQLTRKLVC…NNDGKNYSLH (106 aa).

In terms of assembly, interacts with PPP1CC catalytic subunit of PP1 and associates with glycogen. Forms complexes with glycogen phosphorylase, glycogen synthase and phosphorylase kinase which is necessary for its regulation of PP1 activity.

Functionally, acts as a glycogen-targeting subunit for PP1 and regulates its activity. Activates glycogen synthase, reduces glycogen phosphorylase activity and limits glycogen breakdown. In Xenopus tropicalis (Western clawed frog), this protein is Protein phosphatase 1 regulatory subunit 3C.